The following is a 727-amino-acid chain: Polyribonucleotide nucleotidyltransferase (727 aa).

Residues D488 and D494 each contribute to the Mg(2+) site. A KH domain is found at 555-614 (PKLYTMKINPEKIRDVIGKGGATIRALTDETGCQINIEEDGTITIAATEAAKADEAKRRI). An S1 motif domain is found at 624–692 (GKIYEGPVTK…DKGRVKLSMK (69 aa)). The interval 691–727 (MKALADRPAGDSGRPAPAERGERRERRDGGASEQQQQ) is disordered. Positions 707–720 (PAERGERRERRDGG) are enriched in basic and acidic residues.

It belongs to the polyribonucleotide nucleotidyltransferase family. Mg(2+) serves as cofactor.

The protein resides in the cytoplasm. It catalyses the reaction RNA(n+1) + phosphate = RNA(n) + a ribonucleoside 5'-diphosphate. In terms of biological role, involved in mRNA degradation. Catalyzes the phosphorolysis of single-stranded polyribonucleotides processively in the 3'- to 5'-direction. This Acidovorax sp. (strain JS42) protein is Polyribonucleotide nucleotidyltransferase.